The sequence spans 250 residues: Ribosomal RNA small subunit methyltransferase J (250 aa).

S-adenosyl-L-methionine-binding positions include 101 to 102 (RD), 117 to 118 (ER), 153 to 154 (SS), and aspartate 171.

The protein belongs to the methyltransferase superfamily. RsmJ family.

It is found in the cytoplasm. The enzyme catalyses guanosine(1516) in 16S rRNA + S-adenosyl-L-methionine = N(2)-methylguanosine(1516) in 16S rRNA + S-adenosyl-L-homocysteine + H(+). Its function is as follows. Specifically methylates the guanosine in position 1516 of 16S rRNA. This is Ribosomal RNA small subunit methyltransferase J from Klebsiella pneumoniae (strain 342).